Reading from the N-terminus, the 258-residue chain is Aspartate/glutamate leucyltransferase (258 aa).

It belongs to the R-transferase family. Bpt subfamily.

It localises to the cytoplasm. The catalysed reaction is N-terminal L-glutamyl-[protein] + L-leucyl-tRNA(Leu) = N-terminal L-leucyl-L-glutamyl-[protein] + tRNA(Leu) + H(+). It carries out the reaction N-terminal L-aspartyl-[protein] + L-leucyl-tRNA(Leu) = N-terminal L-leucyl-L-aspartyl-[protein] + tRNA(Leu) + H(+). Functions in the N-end rule pathway of protein degradation where it conjugates Leu from its aminoacyl-tRNA to the N-termini of proteins containing an N-terminal aspartate or glutamate. In Bradyrhizobium sp. (strain BTAi1 / ATCC BAA-1182), this protein is Aspartate/glutamate leucyltransferase.